Reading from the N-terminus, the 96-residue chain is Co-chaperonin GroES (96 aa).

This sequence belongs to the GroES chaperonin family. As to quaternary structure, heptamer of 7 subunits arranged in a ring. Interacts with the chaperonin GroEL.

Its subcellular location is the cytoplasm. Its function is as follows. Together with the chaperonin GroEL, plays an essential role in assisting protein folding. The GroEL-GroES system forms a nano-cage that allows encapsulation of the non-native substrate proteins and provides a physical environment optimized to promote and accelerate protein folding. GroES binds to the apical surface of the GroEL ring, thereby capping the opening of the GroEL channel. The protein is Co-chaperonin GroES of Shewanella sediminis (strain HAW-EB3).